Here is a 350-residue protein sequence, read N- to C-terminus: Probable arabinogalactan endo-beta-1,4-galactanase A (350 aa).

Positions 1–16 (MIYPLLLSALPLLSSA) are cleaved as a signal peptide. N-linked (GlcNAc...) asparagine glycosylation is present at asparagine 128. The active-site Proton donor is the glutamate 152. Glutamate 262 serves as the catalytic Nucleophile.

Belongs to the glycosyl hydrolase 53 family.

Its subcellular location is the secreted. It carries out the reaction The enzyme specifically hydrolyzes (1-&gt;4)-beta-D-galactosidic linkages in type I arabinogalactans.. Endogalactanase involved in the degradation of plant cell wall polysaccharides, and more particularly of hairy regions of pectin. This Aspergillus tubingensis protein is Probable arabinogalactan endo-beta-1,4-galactanase A (galA).